A 315-amino-acid chain; its full sequence is Deoxyhypusine hydroxylase (315 aa).

6 HEAT-like PBS-type repeats span residues 23–52, 56–82, 89–115, 179–205, 211–237, and 244–270; these read IAKRFRSLFTLRNLNGPLCIDAMASALNDK, LRHEIAYCLGQMEDEYALKVLIDLVKN, VRHEAAEALGAIGSESAHKTLKEYSND, NRYRALFSLRDIGDEQSVLALCDGLKD, LRHEVAFVLGQLQHRVAIDPLTTCVLD, and VRHEAAEALGAIASTETIPLLEKLLQD. H58, H91, and E92 together coordinate Fe cation. Residues H213, H246, and E247 each contribute to the Fe cation site.

The protein belongs to the deoxyhypusine hydroxylase family. Fe(2+) serves as cofactor.

It catalyses the reaction [eIF5A protein]-deoxyhypusine + AH2 + O2 = [eIF5A protein]-hypusine + A + H2O. It functions in the pathway protein modification; eIF5A hypusination. Its function is as follows. Catalyzes the hydroxylation of the N(6)-(4-aminobutyl)-L-lysine intermediate produced by deoxyhypusine synthase/DHPS on a critical lysine of the eukaryotic translation initiation factor 5A/eIF-5A. This is the second step of the post-translational modification of that lysine into an unusual amino acid residue named hypusine. Hypusination is unique to mature eIF-5A factor and is essential for its function. In Dictyostelium discoideum (Social amoeba), this protein is Deoxyhypusine hydroxylase (dohh-1).